The primary structure comprises 1243 residues: Plasma membrane calcium-transporting ATPase 2 (1243 aa).

Residues 1–13 show a composition bias toward polar residues; it reads MGDMTNSDFYSKN. A disordered region spans residues 1 to 24; it reads MGDMTNSDFYSKNQRNESSHGGEF. Over 1-94 the chain is Cytoplasmic; that stretch reads MGDMTNSDFY…NFIPPKKPKT (94 aa). Serine 18 bears the Phosphoserine mark. A helical membrane pass occupies residues 95–115; sequence FLQLVWEALQDVTLIILEIAA. Topologically, residues 116-152 are extracellular; sequence IISLGLSFYHPPGEGNEGCATAQGGAEDEGEAEAGWI. The chain crosses the membrane as a helical span at residues 153–173; it reads EGAAILLSVICVVLVTAFNDW. The Cytoplasmic segment spans residues 174-390; it reads SKEKQFRGLQ…KEKSVLQGKL (217 aa). Residues 334–381 are disordered; the sequence is GKMQDGNVDASQSKAKQQDGAAAMEMQPLKSAEGGDADDRKKASMHKK. Residues 391–410 form a helical membrane-spanning segment; it reads TKLAVQIGKAGLVMSAITVI. Topologically, residues 411–443 are extracellular; it reads ILVLYFTVDTFVVNKKPWLPECTPVYVQYFVKF. The chain crosses the membrane as a helical span at residues 444–461; sequence FIIGVTVLVVAVPEGLPL. At 462 to 875 the chain is on the cytoplasmic side; it reads AVTISLAYSV…MWGRNVYDSI (414 aa). The active-site 4-aspartylphosphate intermediate is the aspartate 499. Positions 820 and 824 each coordinate Mg(2+). The chain crosses the membrane as a helical span at residues 876-895; that stretch reads SKFLQFQLTVNVVAVIVAFT. At 896–905 the chain is on the extracellular side; sequence GACITQDSPL. The helical transmembrane segment at 906-926 threads the bilayer; the sequence is KAVQMLWVNLIMDTFASLALA. At 927 to 946 the chain is on the cytoplasmic side; sequence TEPPTETLLLRKPYGRNKPL. Residues 947 to 969 traverse the membrane as a helical segment; it reads ISRTMMKNILGHAVYQLALIFTL. Residues 970–987 are Extracellular-facing; that stretch reads LFVGEKMFQIDSGRNAPL. A helical transmembrane segment spans residues 988 to 1009; sequence HSPPSEHYTIIFNTFVMMQLFN. Residues 1010 to 1028 are Cytoplasmic-facing; it reads EINARKIHGERNVFDGIFR. The helical transmembrane segment at 1029–1050 threads the bilayer; that stretch reads NPIFCTIVLGTFAIQIVIVQFG. The Extracellular segment spans residues 1051 to 1060; it reads GKPFSCSPLQ. The helical transmembrane segment at 1061-1082 threads the bilayer; the sequence is LDQWMWCIFIGLGELVWGQVIA. Over 1083 to 1243 the chain is Cytoplasmic; the sequence is TIPTSRLKFL…SPIHSLETSL (161 aa). Phosphoserine occurs at positions 1120, 1132, and 1134. The interval 1123-1140 is calmodulin-binding subdomain A; the sequence is LRRGQILWFRGLNRIQTQ. At threonine 1139 the chain carries Phosphothreonine; by PKC. The segment at 1141–1150 is calmodulin-binding subdomain B; the sequence is IRVVKAFRSS. Residues alanine 1146, leucine 1151, serine 1163, histidine 1165, aspartate 1177, and serine 1178 each carry the phosphoserine modification. Residue threonine 1188 is modified to Phosphothreonine. Positions 1194–1243 are disordered; it reads AALKQNSSPPSSLNKNNSAIDSGINLTTDTSKSATSSSPGSPIHSLETSL. Low complexity-rich tracts occupy residues 1196 to 1211 and 1220 to 1234; these read LKQN…KNNS and TTDT…SPGS. Serine 1201 is subject to Phosphoserine; by PKA. Position 1211 is a phosphoserine (serine 1211).

Belongs to the cation transport ATPase (P-type) (TC 3.A.3) family. Type IIB subfamily. As to quaternary structure, interacts with PDZD11. Mainly expressed in brain cortex. Found in low levels in skeletal muscle, heart muscle, stomach, liver, kidney and lung. Isoforms containing segment B are found in brain cortex and at low levels in other tissues. Isoforms containing segments X and W are found at low levels in all tissues. Isoforms containing segment A and segment Z are found at low levels in skeletal muscle and heart muscle.

It is found in the cell membrane. Its subcellular location is the synapse. The protein resides in the apical cell membrane. The protein localises to the basolateral cell membrane. The enzyme catalyses Ca(2+)(in) + ATP + H2O = Ca(2+)(out) + ADP + phosphate + H(+). With respect to regulation, up-regulated by calmodulin which increases the affinity of the pump for Ca(2+) ions. Its function is as follows. ATP-driven Ca(2+) ion pump involved in the maintenance of basal intracellular Ca(2+) levels in specialized cells of cerebellar circuit and vestibular and cochlear systems. Uses ATP as an energy source to transport cytosolic Ca(2+) ions across the plasma membrane to the extracellular compartment. Has fast activation and Ca(2+) clearance rate suited to control fast neuronal Ca(2+) dynamics. At parallel fiber to Purkinje neuron synapse, mediates presynaptic Ca(2+) efflux in response to climbing fiber-induced Ca(2+) rise. Provides for fast return of Ca(2+) concentrations back to their resting levels, ultimately contributing to long-term depression induction and motor learning. Plays an essential role in hearing and balance. In cochlear hair cells, shuttles Ca(2+) ions from stereocilia to the endolymph and dissipates Ca(2+) transients generated by the opening of the mechanoelectrical transduction channels. Regulates Ca(2+) levels in the vestibular system, where it contributes to the formation of otoconia. In non-excitable cells, regulates Ca(2+) signaling through spatial control of Ca(2+) ions extrusion and dissipation of Ca(2+) transients generated by store-operated channels. In lactating mammary gland, allows for the high content of Ca(2+) ions in the milk. The sequence is that of Plasma membrane calcium-transporting ATPase 2 from Homo sapiens (Human).